Consider the following 628-residue polypeptide: E3 SUMO-protein ligase PIAS3 (628 aa).

Positions 1 to 200 (MAELGELKHM…QLRFCLCETS (200 aa)) are interaction with CCAR2. The 35-residue stretch at 11–45 (VMSFRVSELQVLLGFAGRNKSGRKHELLAKALHLL) folds into the SAP domain. Residues 19–23 (LQVLL) carry the LXXLL motif motif. Residues Lys-46, Lys-56, Lys-230, and Lys-307 each participate in a glycyl lysine isopeptide (Lys-Gly) (interchain with G-Cter in SUMO2) cross-link. The PINIT domain maps to 115–280 (MHPPLPQPVH…SLSVYLVRQL (166 aa)). Residues 312–393 (PDSEVATTSL…FMEILSSCSD (82 aa)) form an SP-RING-type zinc finger. 4 residues coordinate Zn(2+): Cys-343, His-345, Cys-366, and Cys-369. An SUMO1-binding region spans residues 450-460 (LTIESSSDEED). Residues Lys-466 and Lys-482 each participate in a glycyl lysine isopeptide (Lys-Gly) (interchain with G-Cter in SUMO2) cross-link. Residues 597–617 (VAPGGALREGHGGPLPSGPSL) form a disordered region.

Belongs to the PIAS family. As to quaternary structure, monomer. Binds SUMO1 and UBE2I. Interacts with BCL11A, HMGA2, IRF1, MITF and NCOA2. Interacts with STAT5; the interaction occurs on stimulation by PRL. Interacts with GFI1; the interaction relieves the inhibitory effect of PIAS3 on STAT3-mediated transcriptional activity. Interacts with AR, PLAG1 and ZFHX3. Interacts with STAT3; the interaction occurs on stimulation by IL6, CNTF or OSM and inhibits the DNA binding activity of STAT3. Interacts with MTA1. Interacts with CCAR2 (via N-terminus). Interacts with TRIM8. Interacts with PRDM1/Blimp-1. Post-translationally, sumoylated. Widely expressed.

Its subcellular location is the cytoplasm. The protein localises to the nucleus. The protein resides in the nucleus speckle. Its pathway is protein modification; protein sumoylation. Functionally, functions as an E3-type small ubiquitin-like modifier (SUMO) ligase, stabilizing the interaction between UBE2I and the substrate, and as a SUMO-tethering factor. Plays a crucial role as a transcriptional coregulation in various cellular pathways, including the STAT pathway and the steroid hormone signaling pathway. Involved in regulating STAT3 signaling via inhibiting STAT3 DNA-binding and suppressing cell growth. Enhances the sumoylation of MTA1 and may participate in its paralog-selective sumoylation. Sumoylates CCAR2 which promotes its interaction with SIRT1. Diminishes the sumoylation of ZFHX3 by preventing the colocalization of ZFHX3 with SUMO1 in the nucleus. The sequence is that of E3 SUMO-protein ligase PIAS3 (PIAS3) from Homo sapiens (Human).